We begin with the raw amino-acid sequence, 354 residues long: DNA integrity scanning protein DisA (354 aa).

The region spanning 6 to 144 (GIGIKNVLKI…GDIKYVLRES (139 aa)) is the DAC domain. Residues Gly-73, Leu-91, and 104-108 (TRHRT) each bind ATP.

It belongs to the DisA family. As to quaternary structure, homooctamer. Mg(2+) is required as a cofactor.

The enzyme catalyses 2 ATP = 3',3'-c-di-AMP + 2 diphosphate. Functionally, participates in a DNA-damage check-point that is active prior to asymmetric division when DNA is damaged. DisA forms globular foci that rapidly scan along the chromosomes during sporulation, searching for lesions. When a lesion is present, DisA pauses at the lesion site. This triggers a cellular response that culminates in a temporary block in sporulation initiation. In terms of biological role, also has diadenylate cyclase activity, catalyzing the condensation of 2 ATP molecules into cyclic di-AMP (c-di-AMP). c-di-AMP acts as a signaling molecule that couples DNA integrity with progression of sporulation. The rise in c-di-AMP level generated by DisA while scanning the chromosome, operates as a positive signal that advances sporulation; upon encountering a lesion, the DisA focus arrests at the damaged site and halts c-di-AMP synthesis. The polypeptide is DNA integrity scanning protein DisA (Clostridium beijerinckii (strain ATCC 51743 / NCIMB 8052) (Clostridium acetobutylicum)).